The following is a 282-amino-acid chain: L-allo-isoleucyltransferase (282 aa).

The Acyl-thioester intermediate role is filled by Cys105. The AB hydrolase-1 domain occupies 169 to 261 (HTQSTYTPSD…DGQHHDFVDG (93 aa)).

The protein belongs to the AB hydrolase superfamily.

The catalysed reaction is holo-[CmaD peptidyl-carrier protein] + L-alloisoleucyl-[CmaA peptidyl-carrier protein] = L-alloisoleucyl-[CmaD peptidyl-carrier protein] + holo-[CmaA peptidyl-carrier protein]. In terms of biological role, involved in the biosynthesis of the phytotoxin coronatine (COR). Catalyzes the transfer of the aminoacyl group covalently attached to the pantetheinyl arm of CmaA to the holo-pantetheinyl arm of CmaD. During the shuttling process, CmaE generates a covalent-aminoacyl-S-Cys enzyme intermediate by the action of its donor substrate L-aminoacyl-S-CmaA and delivers it to the sulfhydryl group attached to the phosphopantetheinyl arm on CmaD. The polypeptide is L-allo-isoleucyltransferase (Pseudomonas savastanoi pv. glycinea (Pseudomonas syringae pv. glycinea)).